The following is a 171-amino-acid chain: Calcium channel flower homolog (171 aa).

Residues 1–31 (MSGSGAAGAAAGPAPPAQEEGMTWWYRWLCR) are Cytoplasmic-facing. A helical transmembrane segment spans residues 32 to 52 (LAGVLGAVSCAISGLFNCVTI). Residues 53–56 (HPLN) lie on the Extracellular side of the membrane. The chain crosses the membrane as a helical span at residues 57–77 (IAAGVWMIMNAFILLLCEAPF). The Cytoplasmic portion of the chain corresponds to 78–101 (CCQFVEFANTVAEKVDRLRSWQKA). The chain crosses the membrane as a helical span at residues 102–122 (VFYCGMAIVPIVMSLTLTTLL). At 123–124 (GN) the chain is on the extracellular side. A helical transmembrane segment spans residues 125 to 141 (AIAFATGVLYGLSALGK). The Cytoplasmic segment spans residues 142-171 (KGDAISYARIQQQRQQADEEKLAETFEGEL).

This sequence belongs to the calcium channel flower family. As to quaternary structure, interacts with adaptor protein complex 2 (AP-2). As to expression, expressed in neurons in the brain (at protein level). Expressed in neuroblastoma cell lines (at protein level). Expressed in cytotoxic T-lymphoocytes (at protein level). Low levels of expression in various tissues including the brain, eye, heart, liver and colon. Expression in the heart is at slightly higher levels than isoform 3. Expressed in skin cells. In terms of tissue distribution, very low levels of expression in the brain, liver and eye. Detected at very low levels of expression in skin cells. As to expression, expressed in various tissues, with highest levels of expression in the brain and eye. Expressed in skin cells. Low levels of expression in the liver, colon, heart and spleen. Barely detected in the brain and liver.

The protein localises to the cell membrane. It localises to the vesicle. Transmembrane protein which mediates synaptic endocytosis and fitness-based cell culling. In response to different stimulus strengths, controls two major modes of synaptic vesicle (SV) retrieval in hippocampal neurons; Clathrin-mediated endocytosis (CME) in response to mild stimulation and activity-dependent bulk endocytosis (ADBE) in response to strong stimulation. In cytotoxic T-lymphoocytes (CTLs) facilitates calcium-dependent endocytosis of cytotoxic granules (CGs) at the immuno synapse. Different isoforms work as fitness fingerprints in 'loser' and 'winner' cells and thereby mediate win/lose decisions as part of the cell competition process. This Mus musculus (Mouse) protein is Calcium channel flower homolog (Cacfd1).